The sequence spans 26 residues: uncharacterized protein (26 aa).

The protein resides in the plastid. The protein localises to the chloroplast. This is an uncharacterized protein from Trieres chinensis (Marine centric diatom).